A 131-amino-acid chain; its full sequence is Agouti-signaling protein (131 aa).

An N-terminal signal peptide occupies residues 1 to 22; it reads MDVTRLLLATLVGFLCFFTVHS. Asn39 carries an N-linked (GlcNAc...) asparagine glycan. The segment at 58 to 100 is disordered; that stretch reads KSKKISRKEAEKRKRSSKKKASMKKVARPPPPSPCVATRDSCK. The segment covering 70-84 has biased composition (basic residues); sequence RKRSSKKKASMKKVA. Intrachain disulfides connect Cys92-Cys107, Cys99-Cys113, Cys106-Cys124, Cys110-Cys131, and Cys115-Cys122. An Agouti domain is found at 92-131; sequence CVATRDSCKPPAPACCDPCASCQCRFFGSACTCRVLNPNC.

Epithelial cells of the hair follicles and the epidermis.

It is found in the secreted. In terms of biological role, involved in the regulation of melanogenesis. The binding of ASP to MC1R precludes alpha-MSH initiated signaling and thus blocks production of cAMP, leading to a down-regulation of eumelanogenesis (brown/black pigment) and thus increasing synthesis of pheomelanin (yellow/red pigment). Causes hair follicle melanocytes to synthesize phaeomelanin instead of black or brown pigment eumelanin and produces hairs with a subapical yellow band on an otherwise black or brown background when expressed during the mid-portion of hair growth. The sequence is that of Agouti-signaling protein (Asip) from Mus musculus (Mouse).